The chain runs to 226 residues: Orotate phosphoribosyltransferase 1 (226 aa).

Lysine 30 is a 5-phospho-alpha-D-ribose 1-diphosphate binding site. Residue 38-39 coordinates orotate; that stretch reads FF. Residues 76–77, arginine 106, lysine 107, lysine 110, histidine 112, and 132–140 contribute to the 5-phospho-alpha-D-ribose 1-diphosphate site; these read YK and DDVMTAGTA. Orotate-binding residues include threonine 136 and arginine 164. Phosphoserine occurs at positions 213 and 225.

It belongs to the purine/pyrimidine phosphoribosyltransferase family. PyrE subfamily. Homodimer.

It catalyses the reaction orotidine 5'-phosphate + diphosphate = orotate + 5-phospho-alpha-D-ribose 1-diphosphate. The protein operates within pyrimidine metabolism; UMP biosynthesis via de novo pathway; UMP from orotate: step 1/2. In terms of biological role, catalyzes the transfer of a ribosyl phosphate group from 5-phosphoribose 1-diphosphate to orotate, leading to the formation of orotidine monophosphate (OMP). This Saccharomyces cerevisiae (strain ATCC 204508 / S288c) (Baker's yeast) protein is Orotate phosphoribosyltransferase 1 (URA5).